The primary structure comprises 354 residues: Falstatin (354 aa).

The signal sequence occupies residues 1 to 21 (MKSITFFVFNICSILALLSHC). The BC loop; binds and inhibits the active site cavity of cysteine proteases motif lies at 226–236 (LEGNAGTGYLW). A disordered region spans residues 274 to 317 (KYKIDEHDSSKNVNREIESPEQKESDSKPKKPQMQLLGGPDRMR). Residues 275–302 (YKIDEHDSSKNVNREIESPEQKESDSKP) are compositionally biased toward basic and acidic residues.

Belongs to the protease inhibitor I71 family. In terms of assembly, oligomer; probably composed of 10 monomers. During the liver stage, proteolytically cleaved.

The protein resides in the secreted. It localises to the cytoplasmic vesicle. Its subcellular location is the secretory vesicle. It is found in the microneme. The protein localises to the host cytoplasm. The protein resides in the parasitophorous vacuole lumen. Functionally, cysteine protease inhibitor. Required for the invasion of host erythrocytes by merozoites. In the mosquito vector, essential for the gliding motility of hemocoel sporozoites and, therefore, for salivary gland invasion and the subsequent transmission from the mosquito to the mammalian host. Required for the invasion of host hepatocytes. During the liver stage, may prevent host hepatocyte cell death likely by inhibiting host cysteine proteases. In Plasmodium berghei (strain Anka), this protein is Falstatin.